Consider the following 1035-residue polypeptide: Alpha-mannosidase B (1035 aa).

An N-terminal signal peptide occupies residues 1 to 20 (MGKVLILFLFVLLLITFINC). Asn19 and Asn30 each carry an N-linked (GlcNAc...) asparagine glycan. Zn(2+)-binding residues include His47 and Asp49. The N-linked (GlcNAc...) asparagine glycan is linked to Asn63. Asp161 lines the Zn(2+) pocket. Asp161 functions as the Nucleophile in the catalytic mechanism. N-linked (GlcNAc...) asparagine glycosylation is found at Asn245, Asn250, Asn270, Asn309, Asn327, and Asn438. A Zn(2+)-binding site is contributed by His446. Asn487, Asn497, Asn503, Asn710, Asn719, Asn735, Asn792, Asn852, Asn863, Asn880, Asn962, and Asn993 each carry an N-linked (GlcNAc...) asparagine glycan.

The protein belongs to the glycosyl hydrolase 38 family. Zn(2+) is required as a cofactor.

The protein localises to the secreted. The catalysed reaction is Hydrolysis of terminal, non-reducing alpha-D-mannose residues in alpha-D-mannosides.. The chain is Alpha-mannosidase B (manB) from Dictyostelium discoideum (Social amoeba).